Consider the following 692-residue polypeptide: DNA ligase (692 aa).

NAD(+) is bound by residues 35 to 39 (DLVYD), 88 to 89 (SL), and Glu-117. The active-site N6-AMP-lysine intermediate is the Lys-119. NAD(+) is bound by residues Arg-140, Glu-176, Lys-301, and Lys-325. Zn(2+) is bound by residues Cys-416, Cys-419, Cys-434, and Cys-439. The BRCT domain maps to 611–692 (LTNQSNSWAS…FDLIKNSKKT (82 aa)).

This sequence belongs to the NAD-dependent DNA ligase family. LigA subfamily. Mg(2+) serves as cofactor. Mn(2+) is required as a cofactor.

It catalyses the reaction NAD(+) + (deoxyribonucleotide)n-3'-hydroxyl + 5'-phospho-(deoxyribonucleotide)m = (deoxyribonucleotide)n+m + AMP + beta-nicotinamide D-nucleotide.. DNA ligase that catalyzes the formation of phosphodiester linkages between 5'-phosphoryl and 3'-hydroxyl groups in double-stranded DNA using NAD as a coenzyme and as the energy source for the reaction. It is essential for DNA replication and repair of damaged DNA. The polypeptide is DNA ligase (Mesomycoplasma hyopneumoniae (strain J / ATCC 25934 / NCTC 10110) (Mycoplasma hyopneumoniae)).